The sequence spans 212 residues: MIGVIDYGMGNLFSVSKALERVGVPYVVSDRPEELEKADAFILPGVGSFSDAMDNLRRAKLDQFIHRMVDEGKLLLGICLGMQLIFEESTENGSAKGLGLLAGKAVRLKDRDAEGNKLKVPHMGWNRLTFHQTSPLLSEAEEGFVYFVHSYYIDGMEDGDLLASAEYGVRVPAVVGKRNVFGAQFHPEKSGTAGMAILTQFTKMAAEQQVKK.

The Glutamine amidotransferase type-1 domain maps to 1-211 (MIGVIDYGMG…TKMAAEQQVK (211 aa)). The active-site Nucleophile is Cys-79. Residues His-186 and Glu-188 contribute to the active site.

Heterodimer of HisH and HisF.

The protein localises to the cytoplasm. It catalyses the reaction 5-[(5-phospho-1-deoxy-D-ribulos-1-ylimino)methylamino]-1-(5-phospho-beta-D-ribosyl)imidazole-4-carboxamide + L-glutamine = D-erythro-1-(imidazol-4-yl)glycerol 3-phosphate + 5-amino-1-(5-phospho-beta-D-ribosyl)imidazole-4-carboxamide + L-glutamate + H(+). It carries out the reaction L-glutamine + H2O = L-glutamate + NH4(+). It functions in the pathway amino-acid biosynthesis; L-histidine biosynthesis; L-histidine from 5-phospho-alpha-D-ribose 1-diphosphate: step 5/9. In terms of biological role, IGPS catalyzes the conversion of PRFAR and glutamine to IGP, AICAR and glutamate. The HisH subunit catalyzes the hydrolysis of glutamine to glutamate and ammonia as part of the synthesis of IGP and AICAR. The resulting ammonia molecule is channeled to the active site of HisF. The sequence is that of Imidazole glycerol phosphate synthase subunit HisH from Bacillus velezensis (strain DSM 23117 / BGSC 10A6 / LMG 26770 / FZB42) (Bacillus amyloliquefaciens subsp. plantarum).